Consider the following 648-residue polypeptide: Transcription termination factor FttA (648 aa).

Residues 9–76 form a KHa region; sequence DDILKEIREI…ISVRPDPDIL (68 aa). The segment at 77–144 is KHb; that stretch reads LPPEKAEELI…WAPRVVRTPP (68 aa). A metallo-beta-lactamase N-terminus region spans residues 185–395; the sequence is WIRITGLGGF…LVMESTYGGS (211 aa). Zn(2+) contacts are provided by His253, His255, Asp257, His258, His341, and Asp364. Positions 396-589 are beta-Casp; sequence NDYQMPREEA…MEVHTIDGFS (194 aa). Positions 590-648 are metallo-beta-lactamase C-terminus; it reads GHADRRELMSYVARVRPRPERIITVHGEAHKCLDLSSSIHKKFGISTRAPNNLDAIRLK. His615 serves as a coordination point for Zn(2+).

The protein belongs to the metallo-beta-lactamase superfamily. RNA-metabolizing metallo-beta-lactamase-like family. FttA subfamily. In terms of assembly, homodimer. Probably interacts transiently with RNA polymerase (RNAP), (via at least the RNAP stalk subunits Rpo4 and Rpo7), interacts transiently with the Spt4-Spt5 complex. Zn(2+) serves as cofactor.

Its activity is regulated as follows. Transcription termination is stimulated by the Spt4-Spt5 complex. Dipicolinic acid inhibits FttA-mediated termination in vitro and inhibits growth in vivo. Its function is as follows. Terminates transcription on the whole genome. Termination is linked to FttA-mediated RNA cleavage and does not require NTP hydrolysis. Cleaves endonucleolytically at the RNA exit channel of RNA polymerase (RNAP); the 5'-3' exonuclease activity of this protein degrades the nascent RNA released from RNAP. Functionally, facilitates transcription termination; addition of this factor to stalled transcription elongation complexes (TEC) promotes nascent transcript cleavage and releases RNA polymerase (RNAP) from DNA in vitro. Transcription termination competes with productive transcription elongation. Termination is stimulated by C-rich transcripts and inhibited by G-rich transcripts; the Spt4-Spt5 complex enhances termination on C-less transcripts. Yields an approximately 100 nucleotide RNA, consistent with endonucleolytic cleavage at the RNA exit channel of RNAP. This chain is Transcription termination factor FttA, found in Thermococcus kodakarensis (strain ATCC BAA-918 / JCM 12380 / KOD1) (Pyrococcus kodakaraensis (strain KOD1)).